Consider the following 335-residue polypeptide: Flagellar P-ring protein (335 aa).

The N-terminal stretch at 1-17 is a signal peptide; that stretch reads MNKPMLMLITFATSLLA.

The protein belongs to the FlgI family. In terms of assembly, the basal body constitutes a major portion of the flagellar organelle and consists of four rings (L,P,S, and M) mounted on a central rod.

Its subcellular location is the periplasm. The protein localises to the bacterial flagellum basal body. Functionally, assembles around the rod to form the L-ring and probably protects the motor/basal body from shearing forces during rotation. This is Flagellar P-ring protein from Borreliella burgdorferi (strain ZS7) (Borrelia burgdorferi).